The following is a 1279-amino-acid chain: Photoreceptor cilium actin regulator (1279 aa).

The N-myristoyl glycine moiety is linked to residue Gly-2. Residue Cys-3 is the site of S-palmitoyl cysteine attachment. 5 disordered regions span residues 101-168 (NKPQ…KGRV), 380-598 (AAQV…SHVE), 802-821 (EVSESEDISGDVEEDLENLP), 860-1107 (ASHP…TTAK), and 1127-1279 (KSSS…KEIS). The segment covering 126–168 (FSGKESKENTPQETSKGNRESVCHQPDSQDHCRQSATESKGRV) has biased composition (basic and acidic residues). The span at 477–491 (SEEEDCSPEEEDELS) shows a compositional bias: acidic residues. Basic and acidic residues-rich tracts occupy residues 535-547 (LKMKEAISERIKF) and 580-598 (GPERQRRSQSEGCLKSHVE). Positions 804–818 (SESEDISGDVEEDLE) are enriched in acidic residues. Polar residues-rich tracts occupy residues 886 to 901 (GSGSSPRLHSTRSGST), 913 to 925 (DLNSKQTASPSSE), and 955 to 965 (TNPTPGQSRTL). Residues 972-990 (FSRDPHSSEASRKGPERSL) are compositionally biased toward basic and acidic residues. Residues 1047–1062 (RKTTSPPCQHPQSNPA) show a composition bias toward polar residues. A compositionally biased stretch (low complexity) spans 1076–1090 (PSSASCSSPSVSPSR). Over residues 1091–1100 (GSKDSIHSED) the composition is skewed to basic and acidic residues. Polar residues predominate over residues 1226 to 1241 (WNNSRVPELQGSSTKR). Positions 1259 to 1279 (RMNRGQDRPQPESQPQHKEIS) are enriched in basic and acidic residues.

In terms of tissue distribution, specifically expressed in retina.

It is found in the cell projection. It localises to the cilium. The protein resides in the photoreceptor outer segment. Its subcellular location is the photoreceptor inner segment. Functionally, plays an essential role for normal photoreceptor cell maintenance and vision. This is Photoreceptor cilium actin regulator from Mus musculus (Mouse).